Consider the following 297-residue polypeptide: Lymphocyte antigen 6 complex locus protein G6f (297 aa).

Positions 1–16 (MAVLFLLLFLCGTPQA) are cleaved as a signal peptide. One can recognise an Ig-like V-type domain in the interval 17-122 (ADNMQAIYVA…HNYQNWRVYD (106 aa)). Residues 17 to 235 (ADNMQAIYVA…APSTGWDMPW (219 aa)) lie on the Extracellular side of the membrane. Cys-35 and Cys-106 are oxidised to a cystine. The N-linked (GlcNAc...) asparagine glycan is linked to Asn-88. A helical transmembrane segment spans residues 236–256 (ILMLLLTMGQGVVILALSIVL). The Cytoplasmic segment spans residues 257 to 297 (WRQRVRGAPGRDASIPQFKPEIQVYENIHLARLGPPAHKPR). Tyr-281 is subject to Phosphotyrosine.

In terms of assembly, homodimer; disulfide-linked. Interacts with GRB2 and GRB7 in a phosphorylation-dependent manner. N-glycosylated.

It localises to the cell membrane. Functionally, may play a role in the downstream signal transduction pathways involving GRB2 and GRB7. The polypeptide is Lymphocyte antigen 6 complex locus protein G6f (LY6G6F) (Homo sapiens (Human)).